We begin with the raw amino-acid sequence, 180 residues long: N-terminal acetyltransferase B complex catalytic subunit naa20 (180 aa).

The 155-residue stretch at 2–156 (TDTRKFKATD…DSFDMRKPLS (155 aa)) folds into the N-acetyltransferase domain.

Belongs to the acetyltransferase family. As to quaternary structure, component of the N-terminal acetyltransferase B (NatB) complex.

The protein resides in the cytoplasm. Its subcellular location is the nucleus. It catalyses the reaction N-terminal L-methionyl-L-asparaginyl-[protein] + acetyl-CoA = N-terminal N(alpha)-acetyl-L-methionyl-L-asparaginyl-[protein] + CoA + H(+). It carries out the reaction N-terminal L-methionyl-L-glutaminyl-[protein] + acetyl-CoA = N-terminal N(alpha)-acetyl-L-methionyl-L-glutaminyl-[protein] + CoA + H(+). The catalysed reaction is N-terminal L-methionyl-L-aspartyl-[protein] + acetyl-CoA = N-terminal N(alpha)-acetyl-L-methionyl-L-aspartyl-[protein] + CoA + H(+). The enzyme catalyses N-terminal L-methionyl-L-glutamyl-[protein] + acetyl-CoA = N-terminal N(alpha)-acetyl-L-methionyl-L-glutamyl-[protein] + CoA + H(+). In terms of biological role, catalytic subunit of the NatB N-terminal acetyltransferase, which catalyzes acetylation of the amino-terminal methionine residues of all proteins beginning with Met-Asp or Met-Glu and of some proteins beginning with Met-Asn, Met-Gln or Met-Met. The sequence is that of N-terminal acetyltransferase B complex catalytic subunit naa20 (naa20) from Schizosaccharomyces pombe (strain 972 / ATCC 24843) (Fission yeast).